The following is a 261-amino-acid chain: X-box-binding protein 1 (261 aa).

Residues 1-185 (MVVVAAAPNP…VQAQLSPLQN (185 aa)) lie on the Cytoplasmic side of the membrane. The disordered stretch occupies residues 44 to 93 (RGASPEAASGGLPQARKRQRLTHLSPEEKALRRKLKNRVAAQTARDRKKA). 2 positions are modified to phosphoserine: Ser-47 and Ser-68. Positions 70–133 (EEKALRRKLK…HGLVVENQEL (64 aa)) constitute a bZIP domain. A basic motif region spans residues 72–94 (KALRRKLKNRVAAQTARDRKKAR). A nuclear localization signal (NLS); in isoforms 1 and isoform 2 region spans residues 75–92 (RRKLKNRVAAQTARDRKK). The tract at residues 98–133 (LEQQVVDLEEENQKLLLENQLLREKTHGLVVENQEL) is leucine-zipper. The chain crosses the membrane as a helical; Signal-anchor for type II membrane protein span at residues 186–203 (ISPWILAVLTLQIQSLIS). The Lumenal portion of the chain corresponds to 204 to 261 (CWAFWTTWTQSCSSNALPQSLPAWRSSQRSTQKDPVPYQPPFLCQWGRHQPSWKPLMN). Positions 235–261 (QKDPVPYQPPFLCQWGRHQPSWKPLMN) are necessary for the translational pausing of its own mRNA.

It belongs to the bZIP family. As to quaternary structure, isoform 2 interacts with SIRT1. Isoform 2 interacts with PIK3R1 and PIK3R2; the interactions are direct and induce translocation of XBP1 isoform 2 into the nucleus and the unfolded protein response (UPR) XBP1-dependent target genes activation in a ER stress- and/or insulin-dependent but PI3K-independent manner. Isoform 2 interacts with FOXO1; the interaction is direct and leads to FOXO1 ubiquitination and degradation via the proteasome pathway in hepatocytes. Isoform 1 interacts with HM13. Isoform 1 interacts with RNF139; the interaction induces ubiquitination and degradation of isoform 1. Isoform 1 interacts (via luminal domain) with DERL1; the interaction obviates the need for ectodomain shedding prior HM13/SPP-mediated XBP1 isoform 1 cleavage. Isoform 1 interacts with isoform 2; the interaction sequesters isoform 2 from the nucleus and enhances isoform 2 degradation in the cytoplasm. Isoform 1 interacts with HDAC3 and AKT1; the interactions occur in endothelial cell (EC) under disturbed flow. Isoform 1 interacts with the oncoprotein FOS. Isoform 2 interacts with ATF6; the interaction occurs in a ER stress-dependent manner and is required for DNA binding to the unfolded protein response element (UPRE). Isoform 2 interacts with PIK3R1; the interaction is direct and induces translocation of XBP1 isoform 2 into the nucleus and the unfolded protein response (UPR) XBP1-dependent target genes activation in a ER stress- and/or insulin-dependent but PI3K-independent manner. Acetylated by EP300; acetylation positively regulates the transcriptional activity of XBP1 isoform 2. Isoform 2 is deacetylated by SIRT1; deacetylation negatively regulates the transcriptional activity of XBP1 isoform 2. In terms of processing, ubiquitinated, leading to proteasome-mediated degradation in response to ER stress. Post-translationally, X-box-binding protein 1, cytoplasmic form and luminal form are produced by intramembrane proteolytic cleavage of ER membrane-anchored isoform 1 triggered by HM13/SPP in a DERL1-RNF139-dependent and VCP/p97-independent manner. X-box-binding protein 1, luminal form is ubiquitinated leading to proteasomal degradation. In terms of tissue distribution, expressed in plasma cells in rheumatoid synovium. Over-expressed in primary breast cancer and metastatic breast cancer cells. Isoform 1 and isoform 2 are expressed at higher level in proliferating as compared to confluent quiescent endothelial cells.

It localises to the endoplasmic reticulum. Its subcellular location is the nucleus. It is found in the cytoplasm. The protein resides in the endoplasmic reticulum membrane. The protein localises to the membrane. In terms of biological role, functions as a transcription factor during endoplasmic reticulum (ER) stress by regulating the unfolded protein response (UPR). Required for cardiac myogenesis and hepatogenesis during embryonic development, and the development of secretory tissues such as exocrine pancreas and salivary gland. Involved in terminal differentiation of B lymphocytes to plasma cells and production of immunoglobulins. Modulates the cellular response to ER stress in a PIK3R-dependent manner. Binds to the cis-acting X box present in the promoter regions of major histocompatibility complex class II genes. Involved in VEGF-induced endothelial cell (EC) proliferation and retinal blood vessel formation during embryonic development but also for angiogenesis in adult tissues under ischemic conditions. Also functions as a major regulator of the UPR in obesity-induced insulin resistance and type 2 diabetes for the management of obesity and diabetes prevention. Plays a role in the unconventional cytoplasmic splicing processing of its own mRNA triggered by the endoplasmic reticulum (ER) transmembrane endoribonuclease ERN1: upon ER stress, the emerging XBP1 polypeptide chain, as part of a mRNA-ribosome-nascent chain (R-RNC) complex, cotranslationally recruits its own unprocessed mRNA through transient docking to the ER membrane and translational pausing, therefore facilitating efficient IRE1-mediated XBP1 mRNA isoform 2 production. In endothelial cells (EC), associated with KDR, promotes IRE1-mediated XBP1 mRNA isoform 2 productions in a vascular endothelial growth factor (VEGF)-dependent manner, leading to EC proliferation and angiogenesis. Functions as a negative feed-back regulator of the potent transcription factor XBP1 isoform 2 protein levels through proteasome-mediated degradation, thus preventing the constitutive activation of the ER stress response signaling pathway. Inhibits the transactivation activity of XBP1 isoform 2 in myeloma cells. Acts as a weak transcriptional factor. Together with HDAC3, contributes to the activation of NFE2L2-mediated HMOX1 transcription factor gene expression in a PI(3)K/mTORC2/Akt-dependent signaling pathway leading to EC survival under disturbed flow/oxidative stress. Binds to the ER stress response element (ERSE) upon ER stress. Binds to the consensus 5'-GATGACGTG[TG]N(3)[AT]T-3' sequence related to cAMP responsive element (CRE)-like sequences. Binds the Tax-responsive element (TRE) present in the long terminal repeat (LTR) of T-cell leukemia virus type 1 (HTLV-I) and to the TPA response elements (TRE). Associates preferentially to the HDAC3 gene promoter region in a static flow-dependent manner. Binds to the CDH5/VE-cadherin gene promoter region. Its function is as follows. Functions as a stress-inducible potent transcriptional activator during endoplasmic reticulum (ER) stress by inducing unfolded protein response (UPR) target genes via binding to the UPR element (UPRE). Up-regulates target genes encoding ER chaperones and ER-associated degradation (ERAD) components to enhance the capacity of productive folding and degradation mechanism, respectively, in order to maintain the homeostasis of the ER under ER stress. Plays a role in the production of immunoglobulins and interleukin-6 in the presence of stimuli required for plasma cell differentiation. Induces phospholipid biosynthesis and ER expansion. Contributes to the VEGF-induced endothelial cell (EC) growth and proliferation in a Akt/GSK-dependent and/or -independent signaling pathway, respectively, leading to beta-catenin nuclear translocation and E2F2 gene expression. Promotes umbilical vein EC apoptosis and atherosclerotisis development in a caspase-dependent signaling pathway, and contributes to VEGF-induced EC proliferation and angiogenesis in adult tissues under ischemic conditions. Involved in the regulation of endostatin-induced autophagy in EC through BECN1 transcriptional activation. Plays a role as an oncogene by promoting tumor progression: stimulates zinc finger protein SNAI1 transcription to induce epithelial-to-mesenchymal (EMT) transition, cell migration and invasion of breast cancer cells. Involved in adipocyte differentiation by regulating lipogenic gene expression during lactation. Plays a role in the survival of both dopaminergic neurons of the substantia nigra pars compacta (SNpc), by maintaining protein homeostasis and of myeloma cells. Increases insulin sensitivity in the liver as a response to a high carbohydrate diet, resulting in improved glucose tolerance. Also improves glucose homeostasis in an ER stress- and/or insulin-independent manner through both binding and proteasome-induced degradation of the transcription factor FOXO1, hence resulting in suppression of gluconeogenic genes expression and in a reduction of blood glucose levels. Controls the induction of de novo fatty acid synthesis in hepatocytes by regulating the expression of a subset of lipogenic genes in an ER stress- and UPR-independent manner. Associates preferentially to the HDAC3 gene promoter region in a disturbed flow-dependent manner. Binds to the BECN1 gene promoter region. Binds to the CDH5/VE-cadherin gene promoter region. Binds to the ER stress response element (ERSE) upon ER stress. Binds to the 5'-CCACG-3' motif in the PPARG promoter. In Homo sapiens (Human), this protein is X-box-binding protein 1.